Here is a 189-residue protein sequence, read N- to C-terminus: Protein GrpE (189 aa).

The span at 1–14 (MTEKNEEVVEDKNI) shows a compositional bias: basic and acidic residues. The disordered stretch occupies residues 1 to 38 (MTEKNEEVVEDKNISDQTDENLTEEIESEADDLQVEPD). Acidic residues predominate over residues 17–35 (QTDENLTEEIESEADDLQV).

Belongs to the GrpE family. Homodimer.

It localises to the cytoplasm. Participates actively in the response to hyperosmotic and heat shock by preventing the aggregation of stress-denatured proteins, in association with DnaK and GrpE. It is the nucleotide exchange factor for DnaK and may function as a thermosensor. Unfolded proteins bind initially to DnaJ; upon interaction with the DnaJ-bound protein, DnaK hydrolyzes its bound ATP, resulting in the formation of a stable complex. GrpE releases ADP from DnaK; ATP binding to DnaK triggers the release of the substrate protein, thus completing the reaction cycle. Several rounds of ATP-dependent interactions between DnaJ, DnaK and GrpE are required for fully efficient folding. This Leuconostoc mesenteroides subsp. mesenteroides (strain ATCC 8293 / DSM 20343 / BCRC 11652 / CCM 1803 / JCM 6124 / NCDO 523 / NBRC 100496 / NCIMB 8023 / NCTC 12954 / NRRL B-1118 / 37Y) protein is Protein GrpE.